The primary structure comprises 1357 residues: DNA-directed RNA polymerase subunit beta (1357 aa).

It belongs to the RNA polymerase beta chain family. As to quaternary structure, the RNAP catalytic core consists of 2 alpha, 1 beta, 1 beta' and 1 omega subunit. When a sigma factor is associated with the core the holoenzyme is formed, which can initiate transcription.

The catalysed reaction is RNA(n) + a ribonucleoside 5'-triphosphate = RNA(n+1) + diphosphate. DNA-dependent RNA polymerase catalyzes the transcription of DNA into RNA using the four ribonucleoside triphosphates as substrates. The polypeptide is DNA-directed RNA polymerase subunit beta (Pseudomonas putida (strain ATCC 700007 / DSM 6899 / JCM 31910 / BCRC 17059 / LMG 24140 / F1)).